We begin with the raw amino-acid sequence, 212 residues long: Thymidylate kinase (212 aa).

Position 10 to 17 (10 to 17 (GPDGAGKS)) interacts with ATP.

This sequence belongs to the thymidylate kinase family.

The enzyme catalyses dTMP + ATP = dTDP + ADP. Phosphorylation of dTMP to form dTDP in both de novo and salvage pathways of dTTP synthesis. The sequence is that of Thymidylate kinase from Lactobacillus helveticus (strain DPC 4571).